The primary structure comprises 123 residues: UPF0102 protein Pput_4400 (123 aa).

This sequence belongs to the UPF0102 family.

The sequence is that of UPF0102 protein Pput_4400 from Pseudomonas putida (strain ATCC 700007 / DSM 6899 / JCM 31910 / BCRC 17059 / LMG 24140 / F1).